The chain runs to 192 residues: 3-hydroxyanthranilate 3,4-dioxygenase 1 (192 aa).

Arg-50 lines the O2 pocket. Residues His-54, Glu-60, and His-102 each contribute to the Fe cation site. Glu-60 provides a ligand contact to substrate. Residues Arg-106 and Glu-116 each coordinate substrate. Residues Cys-131, Cys-134, Cys-168, and Cys-171 each contribute to the a divalent metal cation site.

Belongs to the 3-HAO family. The cofactor is Fe(2+).

The protein resides in the cytoplasm. The enzyme catalyses 3-hydroxyanthranilate + O2 = (2Z,4Z)-2-amino-3-carboxymuconate 6-semialdehyde. The protein operates within cofactor biosynthesis; NAD(+) biosynthesis; quinolinate from L-kynurenine: step 3/3. Its function is as follows. Catalyzes the oxidative ring opening of 3-hydroxyanthranilate to 2-amino-3-carboxymuconate semialdehyde, which spontaneously cyclizes to quinolinate. The sequence is that of 3-hydroxyanthranilate 3,4-dioxygenase 1 (bna1-1) from Aspergillus oryzae (strain ATCC 42149 / RIB 40) (Yellow koji mold).